We begin with the raw amino-acid sequence, 459 residues long: MRLGLLMFLPLLLLATRYRAVTALSYDPTWESLDRRPLPAWFDQAKFGIFIHWGVFSVPSFGSEWFWWYWQKERRPKFVDFMDNNYPPGFKYEDFGVLFTAKYFNANQWADLLQASGAKYVVLTSKHHEGFTLWGSAHSWNWNAVDEGPKRDIVKELEVAVRNRTDLHFGLYYSLFEWFHPLFLEDQSSAFQKQRFPVAKTLPELYELVTKYQPEVLWSDGDGGAPDHYWNSTDFLAWLYNESPVRDTVVTNDRWGAGSICKHGGYYTCSDRYNPGHLLPHKWENCMTIDKFSWGYRREAEIGDYLTIEELVKQLVETVSCGGNLLMNIGPTLDGIIPVIFEERLRQMGTWLKVNGEAIYETHTWRSQNDTVTPDVWYTSKPEKKLVYAIFLKWPISGKLFLGQPIGSLGETEVELLGHGRPLTWTSSKPSGIVVELPRLSVHQMPCKWGWTLALTNVT.

Residues 1–23 form the signal peptide; the sequence is MRLGLLMFLPLLLLATRYRAVTA. N-linked (GlcNAc...) asparagine glycosylation is found at Asn163 and Asn231. Residue Ser293 is modified to Phosphoserine. Asn369 is a glycosylation site (N-linked (GlcNAc...) asparagine).

The protein belongs to the glycosyl hydrolase 29 family. In terms of assembly, homotetramer.

Its subcellular location is the secreted. It carries out the reaction an alpha-L-fucoside + H2O = L-fucose + an alcohol. Alpha-L-fucosidase is responsible for hydrolyzing the alpha-1,6-linked fucose joined to the reducing-end N-acetylglucosamine of the carbohydrate moieties of glycoproteins. In Rattus norvegicus (Rat), this protein is Plasma alpha-L-fucosidase (Fuca2).